A 290-amino-acid polypeptide reads, in one-letter code: Formamidopyrimidine-DNA glycosylase (290 aa).

Residue P2 is the Schiff-base intermediate with DNA of the active site. The active-site Proton donor is the E3. The active-site Proton donor; for beta-elimination activity is the K58. DNA contacts are provided by H97, R122, and K165. Residues 250–290 (KVYGREGEPCPGCDCDPVRTGGIARIVQSGRSTFYCPRHQR) form an FPG-type; atypical zinc finger. R280 acts as the Proton donor; for delta-elimination activity in catalysis.

Belongs to the FPG family. Monomer. Zn(2+) serves as cofactor.

It carries out the reaction Hydrolysis of DNA containing ring-opened 7-methylguanine residues, releasing 2,6-diamino-4-hydroxy-5-(N-methyl)formamidopyrimidine.. The catalysed reaction is 2'-deoxyribonucleotide-(2'-deoxyribose 5'-phosphate)-2'-deoxyribonucleotide-DNA = a 3'-end 2'-deoxyribonucleotide-(2,3-dehydro-2,3-deoxyribose 5'-phosphate)-DNA + a 5'-end 5'-phospho-2'-deoxyribonucleoside-DNA + H(+). Involved in base excision repair of DNA damaged by oxidation or by mutagenic agents. Acts as a DNA glycosylase that recognizes and removes damaged bases. Has a preference for oxidized purines, such as 7,8-dihydro-8-oxoguanine (8-oxoG). Has AP (apurinic/apyrimidinic) lyase activity and introduces nicks in the DNA strand. Cleaves the DNA backbone by beta-delta elimination to generate a single-strand break at the site of the removed base with both 3'- and 5'-phosphates. The chain is Formamidopyrimidine-DNA glycosylase from Rhodospirillum centenum (strain ATCC 51521 / SW).